The primary structure comprises 224 residues: Probable septum site-determining protein MinC (224 aa).

It belongs to the MinC family. In terms of assembly, interacts with MinD and FtsZ.

Cell division inhibitor that blocks the formation of polar Z ring septums. Rapidly oscillates between the poles of the cell to destabilize FtsZ filaments that have formed before they mature into polar Z rings. Prevents FtsZ polymerization. The chain is Probable septum site-determining protein MinC from Shewanella amazonensis (strain ATCC BAA-1098 / SB2B).